We begin with the raw amino-acid sequence, 602 residues long: UvrABC system protein C (602 aa).

In terms of domain architecture, GIY-YIG spans Asp15–Ile92. Residues Gly197 to Thr232 form the UVR domain.

It belongs to the UvrC family. As to quaternary structure, interacts with UvrB in an incision complex.

Its subcellular location is the cytoplasm. The UvrABC repair system catalyzes the recognition and processing of DNA lesions. UvrC both incises the 5' and 3' sides of the lesion. The N-terminal half is responsible for the 3' incision and the C-terminal half is responsible for the 5' incision. This Lacticaseibacillus casei (strain BL23) (Lactobacillus casei) protein is UvrABC system protein C.